We begin with the raw amino-acid sequence, 609 residues long: Tyrosine-protein kinase transforming protein Fes (609 aa).

Disordered stretches follow at residues 1–20 and 152–208; these read AARADGTMGFSSELCSPQGH and RDSA…GGRT. The F-BAR; degenerate domain occupies 8-174; it reads MGFSSELCSP…SKDKDRDKAK (167 aa). Composition is skewed to basic and acidic residues over residues 160-175 and 190-206; these read KYQEASKDKDRDKAKL and QDDRHSTSSSEQEREGG. The 90-residue stretch at 247 to 336 folds into the SH2 domain; sequence WYHGALPRAE…KSGIVLNRAV (90 aa). Residues 348 to 609 form the Protein kinase domain; it reads LVLGEQIGRG…ELQSIRKRHR (262 aa). Residues 354–362 and Lys-377 each bind ATP; that span reads IGRGNFGEV. Asp-470 acts as the Proton acceptor in catalysis. Tyr-500 is subject to Phosphotyrosine; by autocatalysis.

This sequence belongs to the protein kinase superfamily. Tyr protein kinase family. Fes/fps subfamily.

The enzyme catalyses L-tyrosyl-[protein] + ATP = O-phospho-L-tyrosyl-[protein] + ADP + H(+). This is Tyrosine-protein kinase transforming protein Fes (V-FES) from Felidae (cat family).